We begin with the raw amino-acid sequence, 187 residues long: CRISPR system Cmr subunit Cmr1-2 (187 aa).

Belongs to the CRISPR system Cmr1 family. In terms of assembly, part of the type III-B Cmr ribonucleoprotein (RNP) complex. This is an elongated RNP with Cmr2 and Cmr3 as the base, with Cmr4 and Cmr5 forming a helical core along the mature crRNA (39 or 45 nt in length), while the complex is capped by Cmr6 and Cmr1. The 5' end of the crRNA is bound to Cmr2 and Cmr3, while Cmr6 and a Cmr1 subunit (Cmr1-1 or Cmr1-2) cap the 3' end of the crRNA. The target RNA lies antiparallel to the crRNA, with its 5' end near Cmr1 and Cmr6 and its 3' end near Cmr2 and Cmr3; major target cleavage occurs nears the junction of Cmr1/Cmr6 and Cmr4/Cmr, with minor cleavage occurring at 6 nt intervals which coincide with the proposed spacing of Cmr4 subunits.

Its subcellular location is the cytoplasm. Functionally, CRISPR (clustered regularly interspaced short palindromic repeat), is an adaptive immune system that provides protection against mobile genetic elements (viruses, transposable elements and conjugative plasmids). CRISPR clusters contain sequences complementary to antecedent mobile elements and target invading nucleic acids. CRISPR clusters are transcribed and processed into CRISPR RNA (crRNA), formerly called psiRNA (prokaryotic silencing) in this organism. Part of the Cmr ribonucleoprotein complex which has divalent cation-dependent endoribonuclease activity specific for ssRNA complementary to the crRNA (target RNA), generating 5' hydroxy- and 3' phosphate or 2'-3' cyclic phosphate termini. Cmr4 is probably the subunit that cleaves target RNA. Cmr complex does not cleave ssDNA complementary to the crRNA. Cleavage of invading RNA is guided by the crRNA; substrate cleavage occurs a fixed distance (14 nt) from the 3' end of the crRNA. In vitro reconstitution shows Cmr1-2 and Cmr5 are not absolutely necessary for target cleavage. The protein is CRISPR system Cmr subunit Cmr1-2 of Pyrococcus furiosus (strain ATCC 43587 / DSM 3638 / JCM 8422 / Vc1).